The sequence spans 804 residues: Elongation factor G, mitochondrial (804 aa).

The N-terminal 9 residues, 1–9, are a transit peptide targeting the mitochondrion; sequence MVRPAQVRA. In terms of domain architecture, tr-type G spans 103–389; sequence SKVRNIGIAA…GVCDYLPNPS (287 aa). GTP-binding positions include 112-119, 187-191, and 241-244; these read AHIDSGKT, DTPGH, and NKMD.

Belongs to the TRAFAC class translation factor GTPase superfamily. Classic translation factor GTPase family. EF-G/EF-2 subfamily.

The protein resides in the mitochondrion. The protein operates within protein biosynthesis; polypeptide chain elongation. Its function is as follows. Mitochondrial GTPase that catalyzes the GTP-dependent ribosomal translocation step during translation elongation. During this step, the ribosome changes from the pre-translocational (PRE) to the post-translocational (POST) state as the newly formed A-site-bound peptidyl-tRNA and P-site-bound deacylated tRNA move to the P and E sites, respectively. Catalyzes the coordinated movement of the two tRNA molecules, the mRNA and conformational changes in the ribosome. In Talaromyces stipitatus (strain ATCC 10500 / CBS 375.48 / QM 6759 / NRRL 1006) (Penicillium stipitatum), this protein is Elongation factor G, mitochondrial (mef1).